The sequence spans 348 residues: NADH-quinone oxidoreductase subunit H (348 aa).

A run of 8 helical transmembrane segments spans residues 21 to 41 (IAGILLIALPVMLAVAMVIYV), 87 to 107 (GIFLLAPIVTFVVALVAWAVI), 120 to 140 (VGLLYVLAISSLGVYGIVMAG), 166 to 186 (IGFILICVVLWAGTFNLSEIV), 195 to 215 (GIVNGYFFNILLFPMWVLFFI), 258 to 278 (NILLLCSLNTVLFFGGWLPPI), 288 to 308 (GFLWFLIKTFLFFFMFSWIWA), and 325 to 345 (VFLPMSLLFVFLISGYLMATG).

Belongs to the complex I subunit 1 family. In terms of assembly, NDH-1 is composed of 14 different subunits. Subunits NuoA, H, J, K, L, M, N constitute the membrane sector of the complex.

It localises to the cell inner membrane. The catalysed reaction is a quinone + NADH + 5 H(+)(in) = a quinol + NAD(+) + 4 H(+)(out). In terms of biological role, NDH-1 shuttles electrons from NADH, via FMN and iron-sulfur (Fe-S) centers, to quinones in the respiratory chain. The immediate electron acceptor for the enzyme in this species is believed to be ubiquinone. Couples the redox reaction to proton translocation (for every two electrons transferred, four hydrogen ions are translocated across the cytoplasmic membrane), and thus conserves the redox energy in a proton gradient. This subunit may bind ubiquinone. This is NADH-quinone oxidoreductase subunit H from Erythrobacter litoralis (strain HTCC2594).